The sequence spans 495 residues: 3-octaprenyl-4-hydroxybenzoate carboxy-lyase (495 aa).

Asn-172 is a Mn(2+) binding site. Residues Ile-175–Arg-177, Arg-189–Leu-191, and Arg-194–Gly-195 contribute to the prenylated FMN site. Residue Glu-238 coordinates Mn(2+). Asp-287 (proton donor) is an active-site residue.

Belongs to the UbiD family. As to quaternary structure, homohexamer. Requires prenylated FMN as cofactor. It depends on Mn(2+) as a cofactor.

It is found in the cell membrane. The enzyme catalyses a 4-hydroxy-3-(all-trans-polyprenyl)benzoate + H(+) = a 2-(all-trans-polyprenyl)phenol + CO2. It functions in the pathway cofactor biosynthesis; ubiquinone biosynthesis. Functionally, catalyzes the decarboxylation of 3-octaprenyl-4-hydroxy benzoate to 2-octaprenylphenol, an intermediate step in ubiquinone biosynthesis. The sequence is that of 3-octaprenyl-4-hydroxybenzoate carboxy-lyase from Yersinia pestis bv. Antiqua (strain Angola).